Here is a 489-residue protein sequence, read N- to C-terminus: Probable 26S proteasome non-ATPase regulatory subunit 3 (489 aa).

Positions 1 to 23 (MTQDVEMKEVPAPAPSNSVTAAT) are disordered. The PCI domain occupies 241–422 (CRYLFYLGKI…GWMVSKETGD (182 aa)). Residues 454-489 (PANSHKDKESAEKRRERQQQEQELAKHIAEEDDDEF) form a disordered region. The span at 457 to 482 (SHKDKESAEKRRERQQQEQELAKHIA) shows a compositional bias: basic and acidic residues.

The protein belongs to the proteasome subunit S3 family. As to quaternary structure, the 26S proteasome is composed of a core protease, known as the 20S proteasome, capped at one or both ends by the 19S regulatory complex (RC). The RC is composed of at least 18 different subunits in two subcomplexes, the base and the lid, which form the portions proximal and distal to the 20S proteolytic core, respectively.

Its subcellular location is the nucleus. Functionally, acts as a regulatory subunit of the 26 proteasome which is involved in the ATP-dependent degradation of ubiquitinated proteins. This is Probable 26S proteasome non-ATPase regulatory subunit 3 (21D7) from Daucus carota (Wild carrot).